Here is a 953-residue protein sequence, read N- to C-terminus: UvrABC system protein A (953 aa).

Position 33–40 (33–40 (GLSGSGKS)) interacts with ATP. ABC transporter domains lie at 320-599 (WGST…EESI) and 619-949 (GHDN…RYLK). 652-659 (GVSGSGKS) contacts ATP. A C4-type zinc finger spans residues 752 to 778 (CEACQGDGLIKIEMHFLPDVYVKCDIC).

Belongs to the ABC transporter superfamily. UvrA family. In terms of assembly, forms a heterotetramer with UvrB during the search for lesions.

Its subcellular location is the cytoplasm. Its function is as follows. The UvrABC repair system catalyzes the recognition and processing of DNA lesions. UvrA is an ATPase and a DNA-binding protein. A damage recognition complex composed of 2 UvrA and 2 UvrB subunits scans DNA for abnormalities. When the presence of a lesion has been verified by UvrB, the UvrA molecules dissociate. The polypeptide is UvrABC system protein A (Rickettsia typhi (strain ATCC VR-144 / Wilmington)).